The primary structure comprises 549 residues: Oxygen-dependent choline dehydrogenase (549 aa).

FAD is bound at residue 4–33 (DFVIIGSGSAGSALAYRLSEDGRNSVIVLE). The active-site Proton acceptor is the His465.

It belongs to the GMC oxidoreductase family. FAD is required as a cofactor.

The protein localises to the cell membrane. It carries out the reaction choline + A = betaine aldehyde + AH2. The enzyme catalyses betaine aldehyde + NAD(+) + H2O = glycine betaine + NADH + 2 H(+). It participates in amine and polyamine biosynthesis; betaine biosynthesis via choline pathway; betaine aldehyde from choline (cytochrome c reductase route): step 1/1. In terms of biological role, involved in the biosynthesis of the osmoprotectant glycine betaine. Catalyzes the oxidation of choline to betaine aldehyde and betaine aldehyde to glycine betaine at the same rate. The chain is Oxygen-dependent choline dehydrogenase from Rhizobium meliloti (strain 1021) (Ensifer meliloti).